Here is a 103-residue protein sequence, read N- to C-terminus: Large ribosomal subunit protein bL21 (103 aa).

This sequence belongs to the bacterial ribosomal protein bL21 family. In terms of assembly, part of the 50S ribosomal subunit. Contacts protein L20.

In terms of biological role, this protein binds to 23S rRNA in the presence of protein L20. In Polaromonas naphthalenivorans (strain CJ2), this protein is Large ribosomal subunit protein bL21.